The chain runs to 363 residues: Dihydroorotate dehydrogenase (quinone) (363 aa).

FMN is bound by residues 67–71 (AGYDK) and Thr-91. Lys-71 provides a ligand contact to substrate. 116-120 (NRMGF) contacts substrate. FMN is bound by residues Asn-145 and Asn-178. Residue Asn-178 participates in substrate binding. The active-site Nucleophile is the Ser-181. Substrate is bound at residue Asn-183. FMN is bound by residues Lys-224 and Thr-254. 255–256 (NT) serves as a coordination point for substrate. FMN is bound by residues Gly-275, Gly-304, and 325–326 (YS).

This sequence belongs to the dihydroorotate dehydrogenase family. Type 2 subfamily. Monomer. FMN is required as a cofactor.

It localises to the cell membrane. The enzyme catalyses (S)-dihydroorotate + a quinone = orotate + a quinol. The protein operates within pyrimidine metabolism; UMP biosynthesis via de novo pathway; orotate from (S)-dihydroorotate (quinone route): step 1/1. In terms of biological role, catalyzes the conversion of dihydroorotate to orotate with quinone as electron acceptor. The polypeptide is Dihydroorotate dehydrogenase (quinone) (Acidithiobacillus ferrooxidans (strain ATCC 23270 / DSM 14882 / CIP 104768 / NCIMB 8455) (Ferrobacillus ferrooxidans (strain ATCC 23270))).